The primary structure comprises 380 residues: Cytochrome b (380 aa).

The next 4 membrane-spanning stretches (helical) occupy residues 33–53, 77–98, 113–133, and 178–198; these read FGSLLGLCLISQILTGLFLAM, WLIRNLHANGASFFFICIYFHI, WNIGVVLLLLVMMTAFVGYVL, and FFAFHFLFPFVILAMTILHLL. Heme b-binding residues include His83 and His97. 2 residues coordinate heme b: His182 and His196. Residue His201 participates in a ubiquinone binding. 4 helical membrane-spanning segments follow: residues 226–246, 288–308, 320–340, and 347–367; these read YKDLLGFAILLVALASLALFS, LGGVLALLASILVLMVVPFLH, VSQFLFWTLIADVAILTWIGG, and FIIIGQVASVLYFSLFLVFFP.

It belongs to the cytochrome b family. The cytochrome bc1 complex contains 3 respiratory subunits (MT-CYB, CYC1 and UQCRFS1), 2 core proteins (UQCRC1 and UQCRC2) and probably 6 low-molecular weight proteins. Heme b serves as cofactor.

The protein localises to the mitochondrion inner membrane. Its function is as follows. Component of the ubiquinol-cytochrome c reductase complex (complex III or cytochrome b-c1 complex) that is part of the mitochondrial respiratory chain. The b-c1 complex mediates electron transfer from ubiquinol to cytochrome c. Contributes to the generation of a proton gradient across the mitochondrial membrane that is then used for ATP synthesis. This Sarda sarda (Atlantic bonito) protein is Cytochrome b (mt-cyb).